The following is a 75-amino-acid chain: Cruzioseptin-7 (75 aa).

The first 22 residues, 1–22 (MAKLKKSLFLVLFLGLVSLSIC), serve as a signal peptide directing secretion. The propeptide occupies 23-43 (EEEKREEENEEVQEDDDQSEE). Residues 25–44 (EKREEENEEVQEDDDQSEEK) are disordered. Acidic residues predominate over residues 30-41 (ENEEVQEDDDQS).

In terms of tissue distribution, expressed by the skin glands.

The protein localises to the secreted. Functionally, has antimicrobial activity. This chain is Cruzioseptin-7, found in Cruziohyla calcarifer (Splendid leaf frog).